The chain runs to 123 residues: Large ribosomal subunit protein bL12 (123 aa).

This sequence belongs to the bacterial ribosomal protein bL12 family. Homodimer. Part of the ribosomal stalk of the 50S ribosomal subunit. Forms a multimeric L10(L12)X complex, where L10 forms an elongated spine to which 2 to 4 L12 dimers bind in a sequential fashion. Binds GTP-bound translation factors.

Its function is as follows. Forms part of the ribosomal stalk which helps the ribosome interact with GTP-bound translation factors. Is thus essential for accurate translation. In Geobacillus kaustophilus (strain HTA426), this protein is Large ribosomal subunit protein bL12.